The primary structure comprises 129 residues: ATP synthase epsilon chain (129 aa).

It belongs to the ATPase epsilon chain family. In terms of assembly, F-type ATPases have 2 components, CF(1) - the catalytic core - and CF(0) - the membrane proton channel. CF(1) has five subunits: alpha(3), beta(3), gamma(1), delta(1), epsilon(1). CF(0) has three main subunits: a, b and c.

It localises to the cell inner membrane. In terms of biological role, produces ATP from ADP in the presence of a proton gradient across the membrane. The protein is ATP synthase epsilon chain of Campylobacter jejuni subsp. jejuni serotype O:6 (strain 81116 / NCTC 11828).